The sequence spans 398 residues: Leucine aminopeptidase 1 (398 aa).

A signal peptide spans 1-20 (MKFLQTSLIAAALPAALVSG). The propeptide occupies 21-87 (RFVIENEGDN…LRAWTQSQAS (67 aa)). Asn179 carries N-linked (GlcNAc...) asparagine glycosylation. The Zn(2+) site is built by His187, Asp206, Glu245, and Asp272. Residues Cys321 and Cys325 are joined by a disulfide bond. His354 serves as a coordination point for Zn(2+).

This sequence belongs to the peptidase M28 family. M28E subfamily. Monomer. Zn(2+) is required as a cofactor.

It localises to the secreted. Its function is as follows. Extracellular aminopeptidase that allows assimilation of proteinaceous substrates. In Trichoderma harzianum (Hypocrea lixii), this protein is Leucine aminopeptidase 1 (lap1).